The chain runs to 516 residues: tRNA-guanine(15) transglycosylase (516 aa).

The active-site Nucleophile is the Asp93. Residues Asp128 and Ala196 each coordinate substrate. Residues Cys279, Cys281, and Cys284 each coordinate Zn(2+). A compositionally biased stretch (low complexity) spans Leu488–Gly502. Residues Leu488–Glu516 form a disordered region.

Belongs to the archaeosine tRNA-ribosyltransferase family. It depends on Zn(2+) as a cofactor.

The enzyme catalyses guanosine(15) in tRNA + 7-cyano-7-deazaguanine = 7-cyano-7-carbaguanosine(15) in tRNA + guanine. Its pathway is tRNA modification; archaeosine-tRNA biosynthesis. Functionally, exchanges the guanine residue with 7-cyano-7-deazaguanine (preQ0) at position 15 in the dihydrouridine loop (D-loop) of archaeal tRNAs. This Haloferax volcanii (strain ATCC 29605 / DSM 3757 / JCM 8879 / NBRC 14742 / NCIMB 2012 / VKM B-1768 / DS2) (Halobacterium volcanii) protein is tRNA-guanine(15) transglycosylase.